The following is a 204-amino-acid chain: Large ribosomal subunit protein eL15 (204 aa).

The protein belongs to the eukaryotic ribosomal protein eL15 family. In terms of assembly, component of the large ribosomal subunit.

The protein localises to the cytoplasm. Its function is as follows. Component of the large ribosomal subunit. The ribosome is a large ribonucleoprotein complex responsible for the synthesis of proteins in the cell. This chain is Large ribosomal subunit protein eL15 (rpl15), found in Carassius auratus (Goldfish).